Reading from the N-terminus, the 151-residue chain is Aspartate carbamoyltransferase regulatory chain (151 aa).

Zn(2+) contacts are provided by cysteine 108, cysteine 113, cysteine 136, and cysteine 139.

Belongs to the PyrI family. Contains catalytic and regulatory chains. The cofactor is Zn(2+).

Functionally, involved in allosteric regulation of aspartate carbamoyltransferase. The polypeptide is Aspartate carbamoyltransferase regulatory chain (Porphyromonas gingivalis (strain ATCC 33277 / DSM 20709 / CIP 103683 / JCM 12257 / NCTC 11834 / 2561)).